A 370-amino-acid chain; its full sequence is Cap-specific mRNA (nucleoside-2'-O-)-methyltransferase 1 (370 aa).

The region spanning 87-294 is the RrmJ-type SAM-dependent 2'-O-MTase domain; sequence AFRNRAGHKL…ERYLVCIGFI (208 aa). S-adenosyl-L-methionine is bound by residues glycine 130 and aspartate 207. Lysine 248 acts as the Proton acceptor in catalysis.

As to quaternary structure, component of a complex composed of CBF5, GAR1, NHP2, MTR1, NOP10 and Tb11.01.8210.

Its subcellular location is the nucleus. It carries out the reaction a 5'-end (N(7)-methyl 5'-triphosphoguanosine)-ribonucleoside in mRNA + S-adenosyl-L-methionine = a 5'-end (N(7)-methyl 5'-triphosphoguanosine)-(2'-O-methyl-ribonucleoside) in mRNA + S-adenosyl-L-homocysteine + H(+). Functionally, S-adenosyl-L-methionine-dependent methyltransferase that mediates RNA cap1 2'-O-ribose methylation to the 5'-cap structure of spliced leader and U1 small nuclear RNAs. Methylates the ribose of the first nucleotide of a m(7)GpppG-capped RNA to produce m(7)GpppNmp (cap1). Cap1 modification is linked to higher levels of translation. Recognizes a guanosine cap on RNA independent of its N(7) methylation status. The sequence is that of Cap-specific mRNA (nucleoside-2'-O-)-methyltransferase 1 (MTR1) from Trypanosoma brucei brucei (strain 927/4 GUTat10.1).